A 378-amino-acid polypeptide reads, in one-letter code: MFEFVCQQECAHTQARAGLFHTPHGTVATPRFMPVGTLANVKTLTPEHLKAAGAQMILANTYHLHLQPGEDIVAAAGGLHCFMGWSGPILTDSGGFQVFSLSEMRQISDQGVVFRSPHDGQIIELSPEGAIAIQEALGADVIMAFDECPPYPASREAVIQATQRTLQWLERCIVAKQRSDQALFAIVQGGVYADLRRECAEAMVPYDLPGYAIGGVSVGEPNRIMHEIVAVTAPLLPVHKPRYLMGVGTHLEMLRAIAAGVDLFDCVIPTRLARHGCAIVQGQRWNLKNARFRRDYEPLDPTCPCYTCRTFSRAYLSHLVRAKELLAYTLLSIHNVTELIRFTQAARQAILEERFAAFAAEWEQRLVVDAEEPDAALL.

D92 acts as the Proton acceptor in catalysis. Residues 92–96 (DSGGF), D146, Q188, and G215 contribute to the substrate site. Residues 246-252 (GVGTHLE) are RNA binding. D265 serves as the catalytic Nucleophile. The segment at 270–274 (TRLAR) is RNA binding; important for wobble base 34 recognition. Zn(2+) is bound by residues C303, C305, C308, and H334.

It belongs to the queuine tRNA-ribosyltransferase family. Homodimer. Within each dimer, one monomer is responsible for RNA recognition and catalysis, while the other monomer binds to the replacement base PreQ1. It depends on Zn(2+) as a cofactor.

It catalyses the reaction 7-aminomethyl-7-carbaguanine + guanosine(34) in tRNA = 7-aminomethyl-7-carbaguanosine(34) in tRNA + guanine. It participates in tRNA modification; tRNA-queuosine biosynthesis. Functionally, catalyzes the base-exchange of a guanine (G) residue with the queuine precursor 7-aminomethyl-7-deazaguanine (PreQ1) at position 34 (anticodon wobble position) in tRNAs with GU(N) anticodons (tRNA-Asp, -Asn, -His and -Tyr). Catalysis occurs through a double-displacement mechanism. The nucleophile active site attacks the C1' of nucleotide 34 to detach the guanine base from the RNA, forming a covalent enzyme-RNA intermediate. The proton acceptor active site deprotonates the incoming PreQ1, allowing a nucleophilic attack on the C1' of the ribose to form the product. After dissociation, two additional enzymatic reactions on the tRNA convert PreQ1 to queuine (Q), resulting in the hypermodified nucleoside queuosine (7-(((4,5-cis-dihydroxy-2-cyclopenten-1-yl)amino)methyl)-7-deazaguanosine). The protein is Queuine tRNA-ribosyltransferase of Thermosynechococcus vestitus (strain NIES-2133 / IAM M-273 / BP-1).